The sequence spans 1097 residues: DNA-directed RNA polymerase subunit beta (1097 aa).

The disordered stretch occupies residues 1072 to 1097; sequence QDVNPRRSTPSRPTYESLGVADYDED.

Belongs to the RNA polymerase beta chain family. As to quaternary structure, in cyanobacteria the RNAP catalytic core is composed of 2 alpha, 1 beta, 1 beta', 1 gamma and 1 omega subunit. When a sigma factor is associated with the core the holoenzyme is formed, which can initiate transcription.

It catalyses the reaction RNA(n) + a ribonucleoside 5'-triphosphate = RNA(n+1) + diphosphate. Functionally, DNA-dependent RNA polymerase catalyzes the transcription of DNA into RNA using the four ribonucleoside triphosphates as substrates. In Parasynechococcus marenigrum (strain WH8102), this protein is DNA-directed RNA polymerase subunit beta.